The chain runs to 200 residues: Small ribosomal subunit protein uS4 (200 aa).

The S4 RNA-binding domain occupies 94–157 (SRLDNLVFRA…QTSPQVKDAV (64 aa)).

The protein belongs to the universal ribosomal protein uS4 family. As to quaternary structure, part of the 30S ribosomal subunit. Contacts protein S5. The interaction surface between S4 and S5 is involved in control of translational fidelity.

Its function is as follows. One of the primary rRNA binding proteins, it binds directly to 16S rRNA where it nucleates assembly of the body of the 30S subunit. With S5 and S12 plays an important role in translational accuracy. This is Small ribosomal subunit protein uS4 from Metamycoplasma arthritidis (strain 158L3-1) (Mycoplasma arthritidis).